The primary structure comprises 187 residues: Peptidyl-tRNA hydrolase (187 aa).

Residue tyrosine 18 coordinates tRNA. Histidine 23 serves as the catalytic Proton acceptor. Residues phenylalanine 65, asparagine 67, and asparagine 113 each contribute to the tRNA site.

Belongs to the PTH family. Monomer.

It localises to the cytoplasm. The catalysed reaction is an N-acyl-L-alpha-aminoacyl-tRNA + H2O = an N-acyl-L-amino acid + a tRNA + H(+). In terms of biological role, hydrolyzes ribosome-free peptidyl-tRNAs (with 1 or more amino acids incorporated), which drop off the ribosome during protein synthesis, or as a result of ribosome stalling. Catalyzes the release of premature peptidyl moieties from peptidyl-tRNA molecules trapped in stalled 50S ribosomal subunits, and thus maintains levels of free tRNAs and 50S ribosomes. In Coxiella burnetii (strain CbuG_Q212) (Coxiella burnetii (strain Q212)), this protein is Peptidyl-tRNA hydrolase.